The following is an 87-amino-acid chain: Small ribosomal subunit protein bS20 (87 aa).

Residues 1 to 20 (MANSAQARKRARTALKQRAH) form a disordered region. The segment covering 7–19 (ARKRARTALKQRA) has biased composition (basic residues).

The protein belongs to the bacterial ribosomal protein bS20 family.

Binds directly to 16S ribosomal RNA. This is Small ribosomal subunit protein bS20 from Chromobacterium violaceum (strain ATCC 12472 / DSM 30191 / JCM 1249 / CCUG 213 / NBRC 12614 / NCIMB 9131 / NCTC 9757 / MK).